Reading from the N-terminus, the 677-residue chain is Threonine--tRNA ligase (677 aa).

The TGS domain maps to 1-59 (MAQATISITVNGEAKEVEATTTGVELFAEDKNIIAVKINGENRDLYTPLNDGDTVDPIA). Residues 255–561 (DHRKLGAEMD…LLEHYAGAFP (307 aa)) form a catalytic region. Residues Cys-360, His-411, and His-538 each coordinate Zn(2+).

This sequence belongs to the class-II aminoacyl-tRNA synthetase family. In terms of assembly, homodimer. Zn(2+) is required as a cofactor.

It localises to the cytoplasm. It carries out the reaction tRNA(Thr) + L-threonine + ATP = L-threonyl-tRNA(Thr) + AMP + diphosphate + H(+). Its function is as follows. Catalyzes the attachment of threonine to tRNA(Thr) in a two-step reaction: L-threonine is first activated by ATP to form Thr-AMP and then transferred to the acceptor end of tRNA(Thr). Also edits incorrectly charged L-seryl-tRNA(Thr). This is Threonine--tRNA ligase from Bifidobacterium longum (strain DJO10A).